We begin with the raw amino-acid sequence, 28 residues long: Cruzioseptin-4 (28 aa).

Glutamate 25 is modified (glutamic acid 1-amide). Residues 27–28 (EH) constitute a propeptide that is removed on maturation.

In terms of tissue distribution, expressed by the skin glands.

The protein localises to the secreted. Its function is as follows. Has antimicrobial activity. The polypeptide is Cruzioseptin-4 (Cruziohyla calcarifer (Splendid leaf frog)).